Reading from the N-terminus, the 372-residue chain is Cytochrome b (372 aa).

Helical transmembrane passes span phenylalanine 25–isoleucine 45, tryptophan 69–isoleucine 90, tryptophan 105–leucine 125, and phenylalanine 170–isoleucine 190. 2 residues coordinate heme b: histidine 75 and histidine 89. Histidine 174 and histidine 188 together coordinate heme b. An a ubiquinone-binding site is contributed by histidine 193. Helical transmembrane passes span tyrosine 218–serine 238, leucine 280–histidine 300, leucine 312–serine 332, and phenylalanine 339–proline 358.

The protein belongs to the cytochrome b family. As to quaternary structure, the cytochrome bc1 complex contains 3 respiratory subunits (MT-CYB, CYC1 and UQCRFS1), 2 core proteins (UQCRC1 and UQCRC2) and probably 6 low-molecular weight proteins. Heme b is required as a cofactor.

It is found in the mitochondrion inner membrane. In terms of biological role, component of the ubiquinol-cytochrome c reductase complex (complex III or cytochrome b-c1 complex) that is part of the mitochondrial respiratory chain. The b-c1 complex mediates electron transfer from ubiquinol to cytochrome c. Contributes to the generation of a proton gradient across the mitochondrial membrane that is then used for ATP synthesis. In Naja kaouthia (Monocled cobra), this protein is Cytochrome b (MT-CYB).